The following is a 277-amino-acid chain: Undecaprenyl-diphosphatase (277 aa).

The next 7 membrane-spanning stretches (helical) occupy residues 3-23 (YIIE…TEIF), 48-68 (LTLF…IYYF), 97-117 (ISYA…GLLI), 125-145 (LLSI…VFLL), 198-218 (SFLC…YDAI), 227-247 (IPGF…TIKI), and 257-277 (LIWF…LYII).

This sequence belongs to the UppP family.

Its subcellular location is the cell membrane. It catalyses the reaction di-trans,octa-cis-undecaprenyl diphosphate + H2O = di-trans,octa-cis-undecaprenyl phosphate + phosphate + H(+). Its function is as follows. Catalyzes the dephosphorylation of undecaprenyl diphosphate (UPP). Confers resistance to bacitracin. The chain is Undecaprenyl-diphosphatase from Acholeplasma laidlawii (strain PG-8A).